The following is a 171-amino-acid chain: NRR repressor homolog 2 (171 aa).

Over residues 1–12 the composition is skewed to basic and acidic residues; that stretch reads MEARLSTGEKTK. Disordered stretches follow at residues 1–45, 65–94, and 119–143; these read MEAR…QQQM, AALP…APWR, and TTKG…EEDK. Residues 26–43 show a composition bias toward acidic residues; sequence PEEETAAETTTSEEEEQQ.

Belongs to the NPR1-interactor family. In terms of assembly, interacts with NPR1/NH1. Interacts with NPR3/NH3.

It localises to the nucleus. Functionally, binds to and weakly represses NPR1/NH1-mediated transcriptional activation of LG2 in vitro. This is NRR repressor homolog 2 from Oryza sativa subsp. japonica (Rice).